The primary structure comprises 374 residues: Aclacinomycin 10-hydroxylase RdmB (374 aa).

Positions 171, 190, 213, 240, 241, and 255 each coordinate S-adenosyl-L-methionine.

It belongs to the class I-like SAM-binding methyltransferase superfamily. Cation-independent O-methyltransferase family. Homodimer. Homotetramer in solution. Tetramers might not be very stable in solution.

The enzyme catalyses 15-demethylaclacinomycin T + AH2 + O2 = 10-decarboxymethylaclacinomycin T + A + CO2 + H2O. It carries out the reaction 10-carboxy-13-deoxycarminomycin + AH2 + O2 + H(+) = 10-hydroxy-13-deoxycarminomycin + A + CO2 + H2O. The catalysed reaction is 10-hydroxy-13-deoxycarminomycin + S-adenosyl-L-methionine = 10-hydroxy-13-deoxydaunorubicin + S-adenosyl-L-homocysteine + H(+). It participates in antibiotic biosynthesis; rhodomycin biosynthesis. The protein operates within antibiotic biosynthesis; aclacinomycin biosynthesis. Its activity is regulated as follows. The hydroxylation reaction requires S-adenosyl-L-methionine (SAM) as a cofactor. S-adenosine-L-homocysteine and sinefungin (a SAM analog) can also support the decarboxylative hydroxylation activity with 10-carboxy-13-deoxycarminomycin as substrate. SAM and its analogs are considered an essential structural ligand to maintain ternary structural integrity and the proper binding mode and orientation of electron-rich substrates during decarboxylative hydroxylation of C-10 by RdmB. Functionally, involved in the biosynthesis of anthracyclines, an important group of aromatic polyketide antibiotics used in cancer chemotherapy. Acts as a 10-hydroxylase to catalyze a decarboxylative hydroxylation reaction on anthracyclines. During biosynthesis of rhodomycin, it catalyzes the removal of the carboxylic group at the C-10 position of 15-demethoxy-epsilon-rhodomycin coupled to hydroxylation at the same C-10 position to yield beta-rhodomycin. In vitro, can also catalyze the removal of the carboxylic group at the C-10 position of 15-demethoxyaclacinomycin T coupled to hydroxylation at the same C-10 position to yield 10-decarboxymethylaclacinomycin T. It can also use 10-carboxy-13-deoxycarminomycin, an analog of 15-demethoxy-epsilon-rhodomycin, to yield 10-hydroxy-13-deoxycarminomycin. In addition to its hydroxylation activity, it can act in vitro as a S-adenosyl-L-methionine-dependent O-methyltransferase and catalyze the 4-O-methylation of 10-hydroxy-13-deoxycarminomycin to 10-hydroxy-13-deoxydaunorubicin. The triglycosyl group of anthracyclines prevents the methylation reaction. The protein is Aclacinomycin 10-hydroxylase RdmB of Streptomyces purpurascens.